A 346-amino-acid polypeptide reads, in one-letter code: Small ribosomal subunit biogenesis GTPase RsgA (346 aa).

Positions 1–25 (MAKRKLTQNQTRRIQSNNAKTLHRH) are disordered. A compositionally biased stretch (polar residues) spans 7-20 (TQNQTRRIQSNNAK). A CP-type G domain is found at 103-271 (ENEISRPDYY…LIDSPGIREF (169 aa)). Residues 159 to 162 (NKVD) and 213 to 221 (GQSGVGKSS) each bind GTP. Zn(2+) contacts are provided by Cys-295, Cys-300, His-302, and Cys-308.

It belongs to the TRAFAC class YlqF/YawG GTPase family. RsgA subfamily. As to quaternary structure, monomer. Associates with 30S ribosomal subunit, binds 16S rRNA. The cofactor is Zn(2+).

The protein resides in the cytoplasm. In terms of biological role, one of several proteins that assist in the late maturation steps of the functional core of the 30S ribosomal subunit. Helps release RbfA from mature subunits. May play a role in the assembly of ribosomal proteins into the subunit. Circularly permuted GTPase that catalyzes slow GTP hydrolysis, GTPase activity is stimulated by the 30S ribosomal subunit. In Haemophilus influenzae (strain ATCC 51907 / DSM 11121 / KW20 / Rd), this protein is Small ribosomal subunit biogenesis GTPase RsgA.